A 142-amino-acid chain; its full sequence is Large ribosomal subunit protein uL23 (142 aa).

A Glycyl lysine isopeptide (Lys-Gly) (interchain with G-Cter in SUMO) cross-link involves residue lysine 61.

Belongs to the universal ribosomal protein uL23 family. Component of the large ribosomal subunit (LSU). Mature yeast ribosomes consist of a small (40S) and a large (60S) subunit. The 40S small subunit contains 1 molecule of ribosomal RNA (18S rRNA) and 33 different proteins (encoded by 57 genes). The large 60S subunit contains 3 rRNA molecules (25S, 5.8S and 5S rRNA) and 46 different proteins (encoded by 81 genes). uL23 is associated with the polypeptide exit tunnel.

It is found in the cytoplasm. In terms of biological role, component of the ribosome, a large ribonucleoprotein complex responsible for the synthesis of proteins in the cell. The small ribosomal subunit (SSU) binds messenger RNAs (mRNAs) and translates the encoded message by selecting cognate aminoacyl-transfer RNA (tRNA) molecules. The large subunit (LSU) contains the ribosomal catalytic site termed the peptidyl transferase center (PTC), which catalyzes the formation of peptide bonds, thereby polymerizing the amino acids delivered by tRNAs into a polypeptide chain. The nascent polypeptides leave the ribosome through a tunnel in the LSU and interact with protein factors that function in enzymatic processing, targeting, and the membrane insertion of nascent chains at the exit of the ribosomal tunnel. uL23 is a major component of the universal docking site for these factors at the polypeptide exit tunnel. In Saccharomyces cerevisiae (strain ATCC 204508 / S288c) (Baker's yeast), this protein is Large ribosomal subunit protein uL23.